The sequence spans 250 residues: 2,5-dichloro-2,5-cyclohexadiene-1,4-diol dehydrogenase LinX (250 aa).

The NAD(+) site is built by aspartate 38, aspartate 64, valine 65, tyrosine 156, lysine 160, threonine 191, and threonine 194. Tyrosine 156 functions as the Proton acceptor in the catalytic mechanism.

The protein belongs to the short-chain dehydrogenases/reductases (SDR) family.

The enzyme catalyses 2,5-dichlorocyclohexa-2,5-dien-1,4-diol + NAD(+) = 2,5-dichlorohydroquinone + NADH + H(+). Catalyzes the degradation of 2,5-dichloro-2,5-cyclohexadiene-1,4-diol (2,5-DDOL) into 2,5-dichlorohydroquinone (2,5-DCHQ) in vitro. LinX appears not to be involved in gamma-hexachlorocyclohexane (gamma-HCH) degradation pathway, in contrast to LinC which has the same enzymatic activity. The polypeptide is 2,5-dichloro-2,5-cyclohexadiene-1,4-diol dehydrogenase LinX (Sphingobium indicum (strain DSM 16412 / CCM 7286 / MTCC 6364 / B90A)).